The primary structure comprises 241 residues: 2-C-methyl-D-erythritol 4-phosphate cytidylyltransferase (241 aa).

This sequence belongs to the IspD/TarI cytidylyltransferase family. IspD subfamily. As to quaternary structure, homodimer.

It catalyses the reaction 2-C-methyl-D-erythritol 4-phosphate + CTP + H(+) = 4-CDP-2-C-methyl-D-erythritol + diphosphate. It participates in isoprenoid biosynthesis; isopentenyl diphosphate biosynthesis via DXP pathway; isopentenyl diphosphate from 1-deoxy-D-xylulose 5-phosphate: step 2/6. Catalyzes the formation of 4-diphosphocytidyl-2-C-methyl-D-erythritol from CTP and 2-C-methyl-D-erythritol 4-phosphate (MEP). In Yersinia pseudotuberculosis serotype I (strain IP32953), this protein is 2-C-methyl-D-erythritol 4-phosphate cytidylyltransferase.